The following is a 313-amino-acid chain: Aspartoacylase (313 aa).

Zn(2+) is bound by residues His21 and Glu24. Residues Arg63, Asn70, and Arg71 each coordinate N-acetyl-L-aspartate. Zn(2+) is bound at residue His116. N-acetyl-L-aspartate is bound by residues Tyr164 and Arg168. The Proton donor/acceptor role is filled by Glu178. An N-acetyl-L-aspartate-binding site is contributed by Tyr288.

Belongs to the AspA/AstE family. Aspartoacylase subfamily. Homodimer. Zn(2+) serves as cofactor.

It localises to the cytoplasm. The protein resides in the nucleus. It carries out the reaction an N-acyl-L-aspartate + H2O = a carboxylate + L-aspartate. The enzyme catalyses N-acetyl-L-aspartate + H2O = L-aspartate + acetate. Catalyzes the deacetylation of N-acetylaspartic acid (NAA) to produce acetate and L-aspartate. NAA occurs in high concentration in brain and its hydrolysis NAA plays a significant part in the maintenance of intact white matter. In other tissues it acts as a scavenger of NAA from body fluids. This chain is Aspartoacylase, found in Pongo abelii (Sumatran orangutan).